Reading from the N-terminus, the 342-residue chain is N-acetyl-gamma-glutamyl-phosphate reductase (342 aa).

Cysteine 149 is an active-site residue.

This sequence belongs to the NAGSA dehydrogenase family. Type 1 subfamily.

The protein localises to the cytoplasm. It catalyses the reaction N-acetyl-L-glutamate 5-semialdehyde + phosphate + NADP(+) = N-acetyl-L-glutamyl 5-phosphate + NADPH + H(+). The protein operates within amino-acid biosynthesis; L-arginine biosynthesis; N(2)-acetyl-L-ornithine from L-glutamate: step 3/4. Catalyzes the NADPH-dependent reduction of N-acetyl-5-glutamyl phosphate to yield N-acetyl-L-glutamate 5-semialdehyde. The chain is N-acetyl-gamma-glutamyl-phosphate reductase from Roseobacter denitrificans (strain ATCC 33942 / OCh 114) (Erythrobacter sp. (strain OCh 114)).